The following is a 176-amino-acid chain: uncharacterized protein (176 aa).

This is an uncharacterized protein from Methanocaldococcus jannaschii (strain ATCC 43067 / DSM 2661 / JAL-1 / JCM 10045 / NBRC 100440) (Methanococcus jannaschii).